We begin with the raw amino-acid sequence, 996 residues long: MQSTDLGNKESGKIWHRKPSPATHDGIIVNIVHSTSEYHPKVLRFLNVAFDGSGDSFIAGDHQGNIYVFDLHGNRFNLVQRTAQACTALAFNLRRKSEFLVALADYSIKCFDTVTKELVSWMRGHESSVCSISVHASGRYAITTSSDTAQLWDLDTFQRKRKLNIRQSVGIQKVFFLPLSNTILSCFKDNSIFAWECDTLFCKYQLPGPPEGSNILYKVFAVTRDGRILAAGGKSNHLHLWCLEATGLFRIIQMPAKVRAVRHLEFLPDSFDAGSNQVLGVLSQDGIMRFVNIQTCKLLFEIGTVEEGISSSVISPHGRYIASIMENGSLNVYSVQALTQEINKPPPPLVKVIEDLPSNTVSSSNLKMKIMPGRVQRPARCKESKIPTRVLKQDLTGDLENKENELSEGLNKKRLQILLKGYGEYPTKYRMFIWRSLLQLPENHTAFSSLVDKGTHAAYLSLQKKYPIKSRKLLRVLQRTLSALAHWSAIFSDTPYLPLLAFPFVKLFQNNQLICFEVVATLIINWCQHWFEYFPNPPINILSMIENVLAFHDKELLQHFIDRDITSQVYAWPLLETLFSEVLTREEWLRLFDNIFSNHPSFLLMTVVAYSTCSRAPLLNCTLKNDFEYFFHHRNNLDINVVIREVYHLMETTPADIHPNSMLDAFVALTKGQYPIFNQYPKFIVDYQTREWERIRNDELDFLRERQTVENMQAEVDEQRAKDEAWYQKQELLRRAEETRREILLQEEEKMAQQRQRLAAVKRELEIKEIHLQDAARRRLLKLQQDQREMELRRLEDEIERKVQMRDQEIAATAKDLEIRQLELEAQKRLYEKDLTTSQEAVAKEIREDTDAHRRKAALEEHMFQKLLENSQMGGRRAQRWKEAEEKEFHLQSAKKASALSDASRKWFLRQETSAALEHEEMPWLQRQYMDSAYLPQTSRLHDVSDMDPSTHIFSRNYPTEWNHMEHDLLKNVRDLRRRLTARARNSCRHPHLLVT.

WD repeat units lie at residues 33-74 (HSTS…LHGN), 75-116 (RFNL…TVTK), 117-157 (ELVS…LDTF), 158-200 (QRKR…CDTL), 201-248 (FCKY…ATGL), 249-296 (FRII…IQTC), and 297-334 (KLLFEIGTVEEGISSSVISPHGRYIASIMENGSLNVYS). Residues 388–414 (TRVLKQDLTGDLENKENELSEGLNKKR) adopt a coiled-coil conformation. The region spanning 424–599 (EYPTKYRMFI…RLFDNIFSNH (176 aa)) is the Rab-GAP TBC domain. Residues 699-844 (ELDFLRERQT…LTTSQEAVAK (146 aa)) are a coiled coil. The mediates direct interaction with PJA2 stretch occupies residues 983-986 (RARN).

In terms of assembly, interacts with PJA2; the interaction is direct and recruits PJA2 to centrosomes. Interacts with OFD1; regulates its activity in cilium assembly. Interacts with PRKACA.

Its subcellular location is the cytoplasm. It localises to the cytoskeleton. The protein localises to the microtubule organizing center. The protein resides in the centrosome. It is found in the centriolar satellite. Its subcellular location is the cilium basal body. Functionally, molecular adapter which is involved in cilium biogenesis. Part of a functional complex including OFD1 a centriolar protein involved in cilium assembly. Could regulate the cAMP-dependent phosphorylation of OFD1, and its subsequent ubiquitination by PJA2 which ultimately leads to its proteasomal degradation. The protein is TBC1 domain family member 31 of Mus musculus (Mouse).